The primary structure comprises 366 residues: UDP-N-acetylglucosamine--N-acetylmuramyl-(pentapeptide) pyrophosphoryl-undecaprenol N-acetylglucosamine transferase (366 aa).

UDP-N-acetyl-alpha-D-glucosamine contacts are provided by residues 22–24, Asn134, Arg170, Ser198, Ile253, and Gln298; that span reads TGG.

It belongs to the glycosyltransferase 28 family. MurG subfamily.

It localises to the cell inner membrane. The catalysed reaction is di-trans,octa-cis-undecaprenyl diphospho-N-acetyl-alpha-D-muramoyl-L-alanyl-D-glutamyl-meso-2,6-diaminopimeloyl-D-alanyl-D-alanine + UDP-N-acetyl-alpha-D-glucosamine = di-trans,octa-cis-undecaprenyl diphospho-[N-acetyl-alpha-D-glucosaminyl-(1-&gt;4)]-N-acetyl-alpha-D-muramoyl-L-alanyl-D-glutamyl-meso-2,6-diaminopimeloyl-D-alanyl-D-alanine + UDP + H(+). It functions in the pathway cell wall biogenesis; peptidoglycan biosynthesis. Cell wall formation. Catalyzes the transfer of a GlcNAc subunit on undecaprenyl-pyrophosphoryl-MurNAc-pentapeptide (lipid intermediate I) to form undecaprenyl-pyrophosphoryl-MurNAc-(pentapeptide)GlcNAc (lipid intermediate II). The sequence is that of UDP-N-acetylglucosamine--N-acetylmuramyl-(pentapeptide) pyrophosphoryl-undecaprenol N-acetylglucosamine transferase from Xylella fastidiosa (strain M12).